The chain runs to 114 residues: Amphinase-3 (114 aa).

H15 (proton acceptor) is an active-site residue. N-linked (GlcNAc...) asparagine glycosylation occurs at N25. Intrachain disulfides connect C26–C79, C41–C85, C59–C100, and C97–C114. Residue 42 to 46 (KPINT) coordinates substrate. Residues N67 and N91 are each glycosylated (N-linked (GlcNAc...) asparagine). The Proton donor role is filled by H107.

This sequence belongs to the pancreatic ribonuclease family. Monomer. There are at least five different forms arising from glycan heterogeneity.

It localises to the secreted. Its function is as follows. Endonuclease, hydrolyzes highly polymerized RNA, poly(U) and poly(C), and the dinucleotides CpA and UpA. More active towards rCA than rUA or rUG. Has cytotoxic activity against cultured human submaxillary gland carcinoma cells. The polypeptide is Amphinase-3 (Lithobates pipiens (Northern leopard frog)).